The sequence spans 169 residues: Endoribonuclease YbeY (169 aa).

Zn(2+)-binding residues include His-130, His-134, and His-140.

This sequence belongs to the endoribonuclease YbeY family. The cofactor is Zn(2+).

Its subcellular location is the cytoplasm. Functionally, single strand-specific metallo-endoribonuclease involved in late-stage 70S ribosome quality control and in maturation of the 3' terminus of the 16S rRNA. The chain is Endoribonuclease YbeY from Neisseria meningitidis serogroup B (strain ATCC BAA-335 / MC58).